Reading from the N-terminus, the 384-residue chain is tRNA(Met) cytidine acetate ligase (384 aa).

Residues V7 to L20, G101, N153, and R178 each bind ATP.

It belongs to the TmcAL family.

It is found in the cytoplasm. It carries out the reaction cytidine(34) in elongator tRNA(Met) + acetate + ATP = N(4)-acetylcytidine(34) in elongator tRNA(Met) + AMP + diphosphate. Functionally, catalyzes the formation of N(4)-acetylcytidine (ac(4)C) at the wobble position of elongator tRNA(Met), using acetate and ATP as substrates. First activates an acetate ion to form acetyladenylate (Ac-AMP) and then transfers the acetyl group to tRNA to form ac(4)C34. The polypeptide is tRNA(Met) cytidine acetate ligase (Lactobacillus delbrueckii subsp. bulgaricus (strain ATCC 11842 / DSM 20081 / BCRC 10696 / JCM 1002 / NBRC 13953 / NCIMB 11778 / NCTC 12712 / WDCM 00102 / Lb 14)).